Here is an 80-residue protein sequence, read N- to C-terminus: MKVAVIFLLSALALLSLAGNTFSAKVTGKEASCHDAVAGCPRIYDPVCGTDGITYANECVLCFENRKRIEPVLIRKGGPC.

Residues 1 to 23 (MKVAVIFLLSALALLSLAGNTFS) form the signal peptide. In terms of domain architecture, Kazal-like spans 27–80 (TGKEASCHDAVAGCPRIYDPVCGTDGITYANECVLCFENRKRIEPVLIRKGGPC). 3 cysteine pairs are disulfide-bonded: Cys33–Cys62, Cys40–Cys59, and Cys48–Cys80.

In terms of tissue distribution, in the genital tract, expressed only in male accessory glands including seminal vesicle, coagulating gland and prostate.

The protein resides in the secreted. Functionally, serine protease inhibitor which exhibits anti-trypsin activity. In the pancreas, protects against trypsin-catalyzed premature activation of zymogens. Its function is as follows. In the male reproductive tract, binds to sperm heads where it modulates sperm capacitance by inhibiting calcium uptake and nitrogen oxide (NO) production. The chain is Serine protease inhibitor Kazal-type 1 from Mus musculus (Mouse).